We begin with the raw amino-acid sequence, 131 residues long: Large ribosomal subunit protein bL17 (131 aa).

The protein belongs to the bacterial ribosomal protein bL17 family. Part of the 50S ribosomal subunit. Contacts protein L32.

In Teredinibacter turnerae (strain ATCC 39867 / T7901), this protein is Large ribosomal subunit protein bL17.